We begin with the raw amino-acid sequence, 539 residues long: F-box/WD-40 repeat-containing protein At5g21040 (539 aa).

Residues 65 to 111 (STTIIDLPQALISEILNCLDPKELGLVSCVSTYLHRLASEHHAWKEF) enclose the F-box domain. WD repeat units follow at residues 160–199 (GHTE…SIAA), 201–239 (KPLG…RNLF), 255–292 (GHEG…CVKT), 294–330 (RHSD…PLAI), 334–373 (AHEG…SETS), 382–419 (PHTS…KTNR), and 433–477 (PPQR…EIER). The interval 505 to 539 (GRPDQCSIAAHKNPINGERNRAWHSKRRASGKAKA) is disordered. Basic residues predominate over residues 526-539 (AWHSKRRASGKAKA).

The polypeptide is F-box/WD-40 repeat-containing protein At5g21040 (Arabidopsis thaliana (Mouse-ear cress)).